We begin with the raw amino-acid sequence, 281 residues long: Ras-related protein Rab-40C (281 aa).

4 residues coordinate GTP: serine 23, glycine 26, lysine 27, and serine 46. Residues serine 41–isoleucine 49 are switch-I. The Mg(2+) site is built by serine 46 and aspartate 69. The GTP site is built by glycine 72, asparagine 126, and arginine 127. The interval glycine 72–glutamine 88 is switch-II. The SOCS box domain occupies leucine 175–alanine 228. The interval serine 245–serine 281 is disordered. Positions proline 270 to serine 281 are enriched in polar residues. A lipid anchor (S-palmitoyl cysteine) is attached at cysteine 273. A lipid anchor (S-geranylgeranyl cysteine) is attached at cysteine 278.

This sequence belongs to the small GTPase superfamily. Rab family. In terms of assembly, component of the cullin-5-RING E3 ubiquitin-protein ligase complex (ECS(RAB40C) complex) composed of CUL5, Elongin BC (ELOB and ELOC), RNF7/RBX2 and RAB40C. Interacts with protein phosphatase 6 (PP6) complex components ANKRD28, ANKRD52, PPP6C, PP6R1 and PP6R2; the interaction leads to ANKRD28 ubiquitination and decreased PP6 activity. Interacts with DAB2IP; DAB2IP acts as a GAP for RAB40C. Requires Mg(2+) as cofactor.

The protein localises to the cell membrane. Its subcellular location is the cytoplasm. The protein resides in the cytosol. It localises to the golgi apparatus membrane. The enzyme catalyses GTP + H2O = GDP + phosphate + H(+). Its pathway is protein modification; protein ubiquitination. With respect to regulation, regulated by guanine nucleotide exchange factors (GEFs) which promote the exchange of bound GDP for free GTP. Regulated by GTPase activating proteins (GAPs) including DAB2IP, which increase the GTP hydrolysis activity. Inhibited by GDP dissociation inhibitors (GDIs). Its function is as follows. RAB40C small GTPase acts as substrate-recognition component of the ECS(RAB40C) E3 ubiquitin ligase complex which mediates the ubiquitination and subsequent proteasomal degradation of target proteins. The Rab40 subfamily belongs to the Rab family that are key regulators of intracellular membrane trafficking, from the formation of transport vesicles to their fusion with membranes. Rabs cycle between an inactive GDP-bound form and an active GTP-bound form that is able to recruit to membranes different sets of downstream effectors directly responsible for vesicle formation, movement, tethering and fusion. As part of the ECS(RAB40C) complex, mediates ANKRD28 ubiquitination and degradation, thereby inhibiting protein phosphatase 6 (PP6) complex activity and focal adhesion assembly during cell migration. Also negatively regulate lipid droplets accumulation in a GTP-dependent manner. In Mus musculus (Mouse), this protein is Ras-related protein Rab-40C.